Consider the following 160-residue polypeptide: Protein-export protein SecB (160 aa).

The protein belongs to the SecB family. Homotetramer, a dimer of dimers. One homotetramer interacts with 1 SecA dimer.

It is found in the cytoplasm. In terms of biological role, one of the proteins required for the normal export of preproteins out of the cell cytoplasm. It is a molecular chaperone that binds to a subset of precursor proteins, maintaining them in a translocation-competent state. It also specifically binds to its receptor SecA. This Rhizobium johnstonii (strain DSM 114642 / LMG 32736 / 3841) (Rhizobium leguminosarum bv. viciae) protein is Protein-export protein SecB.